Reading from the N-terminus, the 378-residue chain is Chaperone protein DnaJ (378 aa).

The J domain maps to 5–70; the sequence is DFYEVLGLSK…QKRAAYDQYG (66 aa). The CR-type zinc-finger motif lies at 133-211; it reads GITKEIRIPT…CHGDGRVERY (79 aa). Zn(2+) contacts are provided by Cys-146, Cys-149, Cys-163, Cys-166, Cys-185, Cys-188, Cys-199, and Cys-202. CXXCXGXG motif repeat units follow at residues 146-153, 163-170, 185-192, and 199-206; these read CDKCHGSG, CSTCHGAG, CPTCHGRG, and CSKCHGDG.

The protein belongs to the DnaJ family. As to quaternary structure, homodimer. It depends on Zn(2+) as a cofactor.

It is found in the cytoplasm. Its function is as follows. Participates actively in the response to hyperosmotic and heat shock by preventing the aggregation of stress-denatured proteins and by disaggregating proteins, also in an autonomous, DnaK-independent fashion. Unfolded proteins bind initially to DnaJ; upon interaction with the DnaJ-bound protein, DnaK hydrolyzes its bound ATP, resulting in the formation of a stable complex. GrpE releases ADP from DnaK; ATP binding to DnaK triggers the release of the substrate protein, thus completing the reaction cycle. Several rounds of ATP-dependent interactions between DnaJ, DnaK and GrpE are required for fully efficient folding. Also involved, together with DnaK and GrpE, in the DNA replication of plasmids through activation of initiation proteins. This chain is Chaperone protein DnaJ, found in Proteus mirabilis (strain HI4320).